Consider the following 269-residue polypeptide: Pertussis toxin subunit 1 homolog (269 aa).

The first 34 residues, 1-34, serve as a signal peptide directing secretion; sequence MRCTRAIRQTARTGWLTWLAILAVTAPMTSPAWA.

The protein belongs to the bacterial exotoxin subunit A family.

This chain is Pertussis toxin subunit 1 homolog (ptxA), found in Bordetella parapertussis (strain 12822 / ATCC BAA-587 / NCTC 13253).